Consider the following 302-residue polypeptide: Homoserine kinase (302 aa).

92-102 (PLARGLGSSAT) is an ATP binding site.

Belongs to the GHMP kinase family. Homoserine kinase subfamily.

It is found in the cytoplasm. It catalyses the reaction L-homoserine + ATP = O-phospho-L-homoserine + ADP + H(+). Its pathway is amino-acid biosynthesis; L-threonine biosynthesis; L-threonine from L-aspartate: step 4/5. Functionally, catalyzes the ATP-dependent phosphorylation of L-homoserine to L-homoserine phosphate. This chain is Homoserine kinase, found in Trichormus variabilis (strain ATCC 29413 / PCC 7937) (Anabaena variabilis).